The chain runs to 121 residues: MGCASAKHVATVQNEEEAQRGKSYQNGDVFGDEYRIKPVEEVKYMKNGAEEEQKIAARNQENLEKSASSNTRLKTNKEIPGLVHQPRANMHISESQQEFFRMLDEKIEKGRDYCSEEEDIT.

Disordered regions lie at residues 1 to 28 (MGCA…QNGD) and 60 to 81 (QENL…EIPG). Ser-95 and Ser-115 each carry phosphoserine.

This is an uncharacterized protein from Mus musculus (Mouse).